Here is a 132-residue protein sequence, read N- to C-terminus: Large ribosomal subunit protein bL17 (132 aa).

Belongs to the bacterial ribosomal protein bL17 family. Part of the 50S ribosomal subunit. Contacts protein L32.

This chain is Large ribosomal subunit protein bL17, found in Ehrlichia canis (strain Jake).